The chain runs to 344 residues: uncharacterized protein (344 aa).

The signal sequence occupies residues 1-20 (MEIRIMLFILMMMVMPVSYA).

It belongs to the fimbrial protein family.

Its function is as follows. Part of the yehABCD fimbrial operon. Could contribute to adhesion to various surfaces in specific environmental niches. This is an uncharacterized protein from Escherichia coli (strain K12).